Reading from the N-terminus, the 220-residue chain is Fructose-6-phosphate aldolase (220 aa).

Lys85 (schiff-base intermediate with substrate) is an active-site residue.

It belongs to the transaldolase family. Type 3A subfamily. In terms of assembly, homodecamer.

Its subcellular location is the cytoplasm. It catalyses the reaction beta-D-fructose 6-phosphate = dihydroxyacetone + D-glyceraldehyde 3-phosphate. Functionally, catalyzes the reversible formation of fructose 6-phosphate from dihydroxyacetone and D-glyceraldehyde 3-phosphate via an aldolization reaction. This Salmonella agona (strain SL483) protein is Fructose-6-phosphate aldolase.